A 360-amino-acid chain; its full sequence is Beta-1,3-N-acetylglucosaminyltransferase manic fringe (360 aa).

Residues 1-5 (MILRR) are Cytoplasmic-facing. The helical; Signal-anchor for type II membrane protein transmembrane segment at 6-26 (LFHVLPAFAFTLFILVLLDLQ) threads the bilayer. Residues 27–360 (LRTRSDQKPQ…ALSWNQHVMH (334 aa)) lie on the Lumenal side of the membrane. Residues 51 to 74 (TTAENQHRDGAHEKEKAEGQKWTE) are disordered. A compositionally biased stretch (basic and acidic residues) spans 55–74 (NQHRDGAHEKEKAEGQKWTE). R100 contributes to the substrate binding site. 2 cysteine pairs are disulfide-bonded: C139–C150 and C168–C231. D172 contributes to the substrate binding site. D173 provides a ligand contact to Mn(2+). The N-linked (GlcNAc...) asparagine glycan is linked to N214. The active site involves D261. Residue H285 coordinates Mn(2+). A disulfide bridge connects residues C335 and C344.

It belongs to the glycosyltransferase 31 family. Mn(2+) is required as a cofactor.

It localises to the golgi apparatus membrane. The enzyme catalyses 3-O-(alpha-L-fucosyl)-L-threonyl-[EGF-like domain protein] + UDP-N-acetyl-alpha-D-glucosamine = 3-O-(N-acetyl-beta-D-glucosaminyl-(1-&gt;3)-alpha-L-fucosyl)-L-threonyl-[EGF-like domain protein] + UDP + H(+). The catalysed reaction is 3-O-(alpha-L-fucosyl)-L-seryl-[EGF-like domain protein] + UDP-N-acetyl-alpha-D-glucosamine = 3-O-(N-acetyl-beta-D-glucosaminyl-(1-&gt;3)-alpha-L-fucosyl)-L-seryl-[EGF-like domain protein] + UDP + H(+). In terms of biological role, glycosyltransferase that initiates the elongation of O-linked fucose residues attached to EGF-like repeats in the extracellular domain of Notch molecules. The chain is Beta-1,3-N-acetylglucosaminyltransferase manic fringe from Danio rerio (Zebrafish).